Reading from the N-terminus, the 149-residue chain is UPF0178 protein Cphy_3042 (149 aa).

Positions 112 to 128 (QRRHGKQNLHSKNNKKR) are enriched in basic residues. Residues 112–132 (QRRHGKQNLHSKNNKKRTTGD) form a disordered region.

Belongs to the UPF0178 family.

This chain is UPF0178 protein Cphy_3042, found in Lachnoclostridium phytofermentans (strain ATCC 700394 / DSM 18823 / ISDg) (Clostridium phytofermentans).